Here is a 322-residue protein sequence, read N- to C-terminus: Quinolinate synthase (322 aa).

The iminosuccinate site is built by histidine 38 and serine 55. Cysteine 100 serves as a coordination point for [4Fe-4S] cluster. Iminosuccinate contacts are provided by residues 126 to 128 (YIN) and serine 143. Residue cysteine 186 coordinates [4Fe-4S] cluster. Iminosuccinate contacts are provided by residues 212 to 214 (HPE) and threonine 229. [4Fe-4S] cluster is bound at residue cysteine 279.

Belongs to the quinolinate synthase family. Type 2 subfamily. [4Fe-4S] cluster is required as a cofactor.

It localises to the cytoplasm. It catalyses the reaction iminosuccinate + dihydroxyacetone phosphate = quinolinate + phosphate + 2 H2O + H(+). It functions in the pathway cofactor biosynthesis; NAD(+) biosynthesis; quinolinate from iminoaspartate: step 1/1. Functionally, catalyzes the condensation of iminoaspartate with dihydroxyacetone phosphate to form quinolinate. This is Quinolinate synthase from Aquifex aeolicus (strain VF5).